Consider the following 369-residue polypeptide: Choline-phosphate cytidylyltransferase B (369 aa).

The tract at residues 1–27 (MPVVTTDAESETGIPKSLSNEPPSETM) is disordered. Residues Ile84, Phe85, His92, and Lys122 each contribute to the CTP site. Lys122 and Trp151 together coordinate phosphocholine. CTP-binding residues include His168, Asp169, Tyr173, Gln195, Arg196, Thr197, and Ile200. A disordered region spans residues 309–369 (RMLQALSPKQ…SMSEGDEDEK (61 aa)). Ser315, Ser319, Ser322, Ser323, Ser329, Ser331, and Ser335 each carry phosphoserine. Residues 319–339 (SPVSSPTRSRSPSRSPSPTFS) are compositionally biased toward low complexity. Phosphothreonine is present on Thr345. 6 positions are modified to phosphoserine: Ser346, Ser349, Ser350, Ser355, Ser360, and Ser362. The span at 351–362 (PKAASASISSMS) shows a compositional bias: low complexity.

It belongs to the cytidylyltransferase family. As to quaternary structure, homodimer. In terms of processing, phosphorylated. Post-translationally, extensively phosphorylated. Highly expressed in testis, placenta, brain, ovary, liver and fetal lung. In terms of tissue distribution, expressed in brain, liver and fetal lung.

The protein resides in the cytoplasm. It is found in the endoplasmic reticulum. It catalyses the reaction phosphocholine + CTP + H(+) = CDP-choline + diphosphate. Its pathway is phospholipid metabolism; phosphatidylcholine biosynthesis; phosphatidylcholine from phosphocholine: step 1/2. Its function is as follows. Catalyzes the key rate-limiting step in the CDP-choline pathway for phosphatidylcholine biosynthesis. The chain is Choline-phosphate cytidylyltransferase B (PCYT1B) from Homo sapiens (Human).